The chain runs to 306 residues: Epoxyqueuosine reductase (306 aa).

The active-site Proton donor is the D131. Residues 173–205 enclose the 4Fe-4S ferredoxin-type domain; sequence LDLTYDHPVTDHCGTCTACIDACPTQAIVQPYV. [4Fe-4S] cluster contacts are provided by C185, C188, C191, C195, C211, C238, C241, and C245.

It belongs to the QueG family. Monomer. Cob(II)alamin serves as cofactor. Requires [4Fe-4S] cluster as cofactor.

Its subcellular location is the cytoplasm. It carries out the reaction epoxyqueuosine(34) in tRNA + AH2 = queuosine(34) in tRNA + A + H2O. Its pathway is tRNA modification; tRNA-queuosine biosynthesis. In terms of biological role, catalyzes the conversion of epoxyqueuosine (oQ) to queuosine (Q), which is a hypermodified base found in the wobble positions of tRNA(Asp), tRNA(Asn), tRNA(His) and tRNA(Tyr). In Cellulophaga algicola (strain DSM 14237 / IC166 / ACAM 630), this protein is Epoxyqueuosine reductase.